Reading from the N-terminus, the 632-residue chain is FAD-binding monooxygenase ausB (632 aa).

The segment at 1 to 50 (MASAPEVESVKTPDPASTKTQHTSIAEIHTADQTWNNESNTRLPPNHRHH) is disordered. Composition is skewed to polar residues over residues 15–24 (PASTKTQHTS) and 31–43 (ADQT…NTRL). FAD-binding positions include 116 to 119 (TWYW), 128 to 129 (DI), and Y134. 126 to 128 (MCD) lines the NADP(+) pocket. Residues 269–275 (TGSTAIQ) and 292–293 (RT) contribute to the NADP(+) site.

The protein belongs to the FAD-binding monooxygenase family. The cofactor is FAD.

The enzyme catalyses protoaustinoid A + AH2 + O2 = berkeleyone A + A + H2O. It participates in secondary metabolite biosynthesis; terpenoid biosynthesis. FAD-binding monooxygenase; part of the gene cluster that mediates the biosynthesis of calidodehydroaustin, a fungal meroterpenoid. The first step of the pathway is the synthesis of 3,5-dimethylorsellinic acid by the polyketide synthase ausA. 3,5-dimethylorsellinic acid is then prenylated by the polyprenyl transferase ausN. Further epoxidation by the FAD-dependent monooxygenase ausM and cyclization by the probable terpene cyclase ausL lead to the formation of protoaustinoid A. Protoaustinoid A is then oxidized to spiro-lactone preaustinoid A3 by the combined action of the FAD-binding monooxygenases ausB and ausC, and the dioxygenase ausE. Acid-catalyzed keto-rearrangement and ring contraction of the tetraketide portion of preaustinoid A3 by ausJ lead to the formation of preaustinoid A4. The aldo-keto reductase ausK, with the help of ausH, is involved in the next step by transforming preaustinoid A4 into isoaustinone which is in turn hydroxylated by the P450 monooxygenase ausI to form austinolide. The cytochrome P450 monooxygenase ausG modifies austinolide to austinol. Austinol is further acetylated to austin by the O-acetyltransferase ausP, which spontaneously changes to dehydroaustin. The cytochrome P450 monooxygenase ausR then converts dehydroaustin is into 7-dehydrodehydroaustin. The hydroxylation catalyzed by ausR permits the O-acetyltransferase ausQ to add an additional acetyl group to the molecule, leading to the formation of acetoxydehydroaustin. The short chain dehydrogenase ausT catalyzes the reduction of the double bond present between carbon atoms 1 and 2 to convert 7-dehydrodehydroaustin into 1,2-dihydro-7-hydroxydehydroaustin. AusQ catalyzes not only an acetylation reaction but also the addition of the PKS ausV diketide product to 1,2-dihydro-7-hydroxydehydroaustin, forming precalidodehydroaustin. Finally, the iron/alpha-ketoglutarate-dependent dioxygenase converts precalidodehydroaustin into calidodehydroaustin. In Aspergillus calidoustus, this protein is FAD-binding monooxygenase ausB.